We begin with the raw amino-acid sequence, 76 residues long: Conotoxin Cal5a L2 (76 aa).

Residues 1–22 (MRFYIGLMAALMLTSILRTDSA) form the signal peptide. The propeptide occupies 23-42 (SVGQTGTKSELALIERVIRQ). The residue at position 50 (proline 50) is a 4-hydroxyproline. 4-hydroxyproline; partial is present on residues proline 58, proline 62, and proline 64.

It belongs to the conotoxin T superfamily. Post-translationally, contains 2 disulfide bonds that can be either 'C1-C3, C2-C4' or 'C1-C4, C2-C3', since these disulfide connectivities have been observed for conotoxins with cysteine framework V (for examples, see AC P0DQQ7 and AC P81755). In terms of tissue distribution, expressed by the venom duct.

Its subcellular location is the secreted. Functionally, probable neurotoxin with unknown target. Possibly targets ion channels. The polypeptide is Conotoxin Cal5a L2 (Californiconus californicus (California cone)).